Reading from the N-terminus, the 287-residue chain is Orotidine 5'-phosphate decarboxylase (287 aa).

Lys99 functions as the Proton donor in the catalytic mechanism.

Belongs to the OMP decarboxylase family. Type 2 subfamily.

The catalysed reaction is orotidine 5'-phosphate + H(+) = UMP + CO2. It functions in the pathway pyrimidine metabolism; UMP biosynthesis via de novo pathway; UMP from orotate: step 2/2. This Clostridium novyi (strain NT) protein is Orotidine 5'-phosphate decarboxylase.